Here is a 209-residue protein sequence, read N- to C-terminus: Uracil phosphoribosyltransferase (209 aa).

Residues R79, R104, and 131–139 (DPMLATGGS) contribute to the 5-phospho-alpha-D-ribose 1-diphosphate site. Uracil is bound by residues I194 and 199 to 201 (GDA). D200 lines the 5-phospho-alpha-D-ribose 1-diphosphate pocket.

The protein belongs to the UPRTase family. It depends on Mg(2+) as a cofactor.

The enzyme catalyses UMP + diphosphate = 5-phospho-alpha-D-ribose 1-diphosphate + uracil. Its pathway is pyrimidine metabolism; UMP biosynthesis via salvage pathway; UMP from uracil: step 1/1. Its activity is regulated as follows. Allosterically activated by GTP. In terms of biological role, catalyzes the conversion of uracil and 5-phospho-alpha-D-ribose 1-diphosphate (PRPP) to UMP and diphosphate. This chain is Uracil phosphoribosyltransferase, found in Clostridium beijerinckii (strain ATCC 51743 / NCIMB 8052) (Clostridium acetobutylicum).